Here is a 391-residue protein sequence, read N- to C-terminus: Small ribosomal subunit protein bS1 (391 aa).

S1 motif domains follow at residues 16-90, 108-173, 194-262, and 279-348; these read GDKV…LSRR, NEII…LSRK, GDVI…LSIK, and NDVI…LSIK.

The protein belongs to the bacterial ribosomal protein bS1 family.

Functionally, binds mRNA; thus facilitating recognition of the initiation point. It is needed to translate mRNA with a short Shine-Dalgarno (SD) purine-rich sequence. The polypeptide is Small ribosomal subunit protein bS1 (rpsA) (Staphylococcus aureus (strain N315)).